The sequence spans 192 residues: Xanthine phosphoribosyltransferase (192 aa).

Positions 20 and 27 each coordinate xanthine. 128 to 132 is a binding site for 5-phospho-alpha-D-ribose 1-diphosphate; the sequence is AHGEA. Lysine 156 is a binding site for xanthine.

This sequence belongs to the purine/pyrimidine phosphoribosyltransferase family. Xpt subfamily. In terms of assembly, homodimer.

It is found in the cytoplasm. It carries out the reaction XMP + diphosphate = xanthine + 5-phospho-alpha-D-ribose 1-diphosphate. Its pathway is purine metabolism; XMP biosynthesis via salvage pathway; XMP from xanthine: step 1/1. Converts the preformed base xanthine, a product of nucleic acid breakdown, to xanthosine 5'-monophosphate (XMP), so it can be reused for RNA or DNA synthesis. The protein is Xanthine phosphoribosyltransferase of Lactobacillus acidophilus (strain ATCC 700396 / NCK56 / N2 / NCFM).